A 433-amino-acid chain; its full sequence is Protein translocase subunit SecY (433 aa).

10 consecutive transmembrane segments (helical) span residues Ile17–Gly37, Ile71–Val91, Leu117–Val137, Gly141–Val161, Leu184–Leu204, Pro212–Phe232, Gly268–Phe288, Tyr310–Phe330, Leu366–Asn386, and Tyr388–Asp408.

Belongs to the SecY/SEC61-alpha family. Component of the Sec protein translocase complex. Heterotrimer consisting of SecY, SecE and SecG subunits. The heterotrimers can form oligomers, although 1 heterotrimer is thought to be able to translocate proteins. Interacts with the ribosome. Interacts with SecDF, and other proteins may be involved. Interacts with SecA.

It is found in the cell inner membrane. Its function is as follows. The central subunit of the protein translocation channel SecYEG. Consists of two halves formed by TMs 1-5 and 6-10. These two domains form a lateral gate at the front which open onto the bilayer between TMs 2 and 7, and are clamped together by SecE at the back. The channel is closed by both a pore ring composed of hydrophobic SecY resides and a short helix (helix 2A) on the extracellular side of the membrane which forms a plug. The plug probably moves laterally to allow the channel to open. The ring and the pore may move independently. The protein is Protein translocase subunit SecY of Rickettsia felis (strain ATCC VR-1525 / URRWXCal2) (Rickettsia azadi).